A 358-amino-acid polypeptide reads, in one-letter code: MSSPLEKPQIIAHVQKSVNYTLFDCKWIPCSAKFVCVGNLARGSGVLQVYEIQQGEAKLLQETEKPKPIKCGTFGASSMQQRYLATGDFGGNLNIWNLEAPDTPVYSAKGHNEIINCIDGVGGVGIGDGAPEIVTGSRDGTVKVWDPRQKDTPVANMEPAAGEAKRDCWTVAFGNAYNEQERAVCAGYDNGDIKLFDLRNMSVRWETNIKNGVCSLEFDRKDIVMNKLVATSLEGKFHVFDMRTQHPTKGFASVSEKAHKSTVWQVRHLPQNRDVFMTSGGAGNLHLWKYEYPAQRSRKDSDGVDTGVAGSASLLQNVTLSTQPISSLDWSPDKKGLCVCTSFDQTVRVLIVTKLNRL.

6 WD repeats span residues glutamate 64–tyrosine 106, asparagine 116–alanine 155, glutamate 163–glutamate 206, asparagine 208–glycine 250, alanine 258–arginine 298, and leucine 320–leucine 358.

In terms of assembly, interacts with PIH1D1; the interaction associates DNAAF10 with the R2TP complex. Interacts with several dynein axonemal assembly factors.

It is found in the dynein axonemal particle. Its function is as follows. Key assembly factor specifically required for the stability of axonemal dynein heavy chains in cytoplasm. The polypeptide is Dynein axonemal assembly factor 10 (dnaaf10) (Xenopus laevis (African clawed frog)).